The primary structure comprises 2053 residues: Cell adhesion molecule DSCAML1 (2053 aa).

Residues 1–18 (MWLVTFLLLLDSLHKARP) form the signal peptide. 9 Ig-like C2-type domains span residues 19 to 119 (EDVG…NIRV), 115 to 217 (PNIR…ARLS), 226 to 306 (PTIL…AEAT), 314 to 402 (PLHV…AIIA), 408 to 501 (PRIV…ARIN), 506 to 586 (PSIR…LSIS), 596 to 685 (PPLI…RQLI), 690 to 784 (PRFV…MFLT), and 788 to 885 (PAMI…LTVQ). Residues 19–1591 (EDVGTSLYFV…AQGEGDDVKK (1573 aa)) are Extracellular-facing. N-linked (GlcNAc...) asparagine glycosylation is found at Asn-29 and Asn-79. Intrachain disulfides connect Cys-47–Cys-103, Cys-146–Cys-198, Cys-247–Cys-294, Cys-336–Cys-386, and Cys-429–Cys-485. N-linked (GlcNAc...) asparagine glycosylation is found at Asn-368, Asn-471, Asn-513, Asn-556, Asn-666, Asn-710, Asn-749, Asn-796, and Asn-809. Cystine bridges form between Cys-526–Cys-575 and Cys-617–Cys-669. The cysteines at positions 711 and 767 are disulfide-linked. Residues Cys-810 and Cys-867 are joined by a disulfide bond. 4 Fibronectin type-III domains span residues 887–984 (PPDP…TEEA), 989–1088 (PPMD…TLED), 1093–1189 (PPEN…TKED), and 1193–1288 (PPAG…AGKA). 6 N-linked (GlcNAc...) asparagine glycosylation sites follow: Asn-926, Asn-1082, Asn-1144, Asn-1162, Asn-1275, and Asn-1345. Positions 1278–1377 (EKVTIEPAGK…TGGFDTIIVN (100 aa)) constitute an Ig-like C2-type 10 domain. Cysteines 1311 and 1363 form a disulfide. 2 consecutive Fibronectin type-III domains span residues 1383–1477 (PPDQ…THGR) and 1478–1578 (EPSF…TIPP). N-linked (GlcNAc...) asparagine glycans are attached at residues Asn-1492, Asn-1531, and Asn-1561. The chain crosses the membrane as a helical span at residues 1592–1612 (LFTIGCPVILATLGVALLFIV). Topologically, residues 1613-2053 (RKKRKEKRLK…GAYSKSYTLV (441 aa)) are cytoplasmic. Disordered stretches follow at residues 1715 to 1741 (PLID…HSTR), 1773 to 1803 (HGVT…STES), 1840 to 1862 (SSDQ…STPS), and 1974 to 2053 (LAMP…YTLV). The span at 1732 to 1741 (KNVKSAHSTR) shows a compositional bias: basic residues. A compositionally biased stretch (polar residues) spans 1773–1789 (HGVTVTESDSYSASLSQ). The span at 1977–2009 (PAPPAGTAPPAPGPTPAEPPTAPSAAPPAPSTE) shows a compositional bias: pro residues. A compositionally biased stretch (polar residues) spans 2029–2041 (EMSTSGVGRSQKQ).

In terms of assembly, homodimer; mediates homophilic interactions to promote cell adhesion. Detected in heart, liver, pancreas, skeletal muscle, kidney and in brain, in particular in the amygdala, caudate nucleus, corpus callosum, hippocampus, substantia nigra, thalamus and subthalamus.

Its subcellular location is the cell membrane. The protein localises to the synapse. Its function is as follows. Cell adhesion molecule that plays a role in neuronal self-avoidance. Promotes repulsion between specific neuronal processes of either the same cell or the same subtype of cells. Promotes both isoneuronal self-avoidance for creating an orderly neurite arborization in retinal rod bipolar cells and heteroneuronal self-avoidance to maintain mosaic spacing between AII amacrine cells. Adhesion molecule that promotes lamina-specific synaptic connections in the retina: expressed in specific subsets of interneurons and retinal ganglion cells (RGCs) and promotes synaptic connectivity via homophilic interactions. The sequence is that of Cell adhesion molecule DSCAML1 (DSCAML1) from Homo sapiens (Human).